The primary structure comprises 831 residues: Probable basic-leucine zipper transcription factor P (831 aa).

2 disordered regions span residues 1 to 33 (MNHRIEDITSNPSSPSPNSPFSSPQVSLQPSII) and 54 to 166 (NITS…IASR). Residues 54-85 (NITSSPSTSSSPPISTTTTTTTTTTTTATAKK) are compositionally biased toward low complexity. A compositionally biased stretch (basic and acidic residues) spans 87–96 (NSKEKKKTTN). Positions 97 to 129 (KDNNNNNNNNNSNNQQQQQQQQQQQQQQQQQQQ) are enriched in low complexity. Positions 101-141 (NNNNNNNSNNQQQQQQQQQQQQQQQQQQQYEEEDDDEEDEG) form a coiled coil. Residues 130 to 143 (YEEEDDDEEDEGGD) are compositionally biased toward acidic residues. Residues 144 to 154 (DNTKVGKGEKM) show a composition bias toward basic and acidic residues. One can recognise a bZIP domain in the interval 151–214 (GEKMKARRTN…LELLKFSQEV (64 aa)). Residues 153 to 173 (KMKARRTNQNIASRNYRQRKK) form a basic motif region. Positions 176-183 (IKEMEDKI) are leucine-zipper. 2 stretches are compositionally biased toward low complexity: residues 469–484 (SSSSSSSSSSMSSSTS) and 497–510 (SSSNSSPSSLSASS). Disordered stretches follow at residues 469-510 (SSSS…SASS), 658-697 (QQQAAQQQSPIQTQLSPPQHITPQHTPQQHIQQQQQHQNY), 715-771 (DATN…NTNK), and 787-810 (SLFSHQHQQQNSQSPTLPPSQNDS). Residues 601 to 664 (AQQHAQQQAQ…QAAQQQAAQQ (64 aa)) are a coiled coil. Composition is skewed to low complexity over residues 674–695 (PPQHITPQHTPQQHIQQQQQHQ), 720–750 (NNNNNNNNNNNNNNNNNNNNNNNNNNNNNNN), and 787–800 (SLFSHQHQQQNSQS).

This sequence belongs to the bZIP family.

It localises to the nucleus. In terms of biological role, probable transcriptional regulator. The sequence is that of Probable basic-leucine zipper transcription factor P (bzpP) from Dictyostelium discoideum (Social amoeba).